Reading from the N-terminus, the 451-residue chain is Tubulin alpha chain (451 aa).

Gln-11 contributes to the GTP binding site. At Lys-40 the chain carries N6-acetyllysine. GTP is bound by residues Glu-71, Gly-144, Thr-145, Thr-179, Asn-206, and Asn-228. Glu-71 lines the Mg(2+) pocket. Glu-254 is a catalytic residue.

It belongs to the tubulin family. Dimer of alpha and beta chains. A typical microtubule is a hollow water-filled tube with an outer diameter of 25 nm and an inner diameter of 15 nM. Alpha-beta heterodimers associate head-to-tail to form protofilaments running lengthwise along the microtubule wall with the beta-tubulin subunit facing the microtubule plus end conferring a structural polarity. Microtubules usually have 13 protofilaments but different protofilament numbers can be found in some organisms and specialized cells. Mg(2+) serves as cofactor. In terms of processing, undergoes a tyrosination/detyrosination cycle, the cyclic removal and re-addition of a C-terminal tyrosine residue by the enzymes tubulin tyrosine carboxypeptidase (TTCP) and tubulin tyrosine ligase (TTL), respectively. Post-translationally, acetylation of alpha chains at Lys-40 stabilizes microtubules and affects affinity and processivity of microtubule motors. This modification has a role in multiple cellular functions, ranging from cell motility, cell cycle progression or cell differentiation to intracellular trafficking and signaling.

The protein localises to the cytoplasm. Its subcellular location is the cytoskeleton. The enzyme catalyses GTP + H2O = GDP + phosphate + H(+). Functionally, tubulin is the major constituent of microtubules, a cylinder consisting of laterally associated linear protofilaments composed of alpha- and beta-tubulin heterodimers. Microtubules grow by the addition of GTP-tubulin dimers to the microtubule end, where a stabilizing cap forms. Below the cap, tubulin dimers are in GDP-bound state, owing to GTPase activity of alpha-tubulin. This is Tubulin alpha chain (TUBA) from Triticum aestivum (Wheat).